A 1734-amino-acid chain; its full sequence is Gag-Pol polyprotein (1734 aa).

Residue G2 is the site of N-myristoyl glycine; by host attachment. Positions 109 to 112 (PTAP) match the PTAP/PSAP motif motif. The interval 112-217 (PILPSGPSTQ…STTSRAFPLR (106 aa)) is disordered. Positions 128-132 (LYPAL) match the LYPX(n)L motif motif. The short motif at 161-164 (PPPY) is the PPXY motif element. At S191 the chain carries Phosphoserine; by host. The interval 344–392 (GRSPTNLAKVKGITQGPNESPSAFLERLKEAYRRYTPYDPEDHGQETSV) is interaction with host PIAS4. The interaction with host UBE2I stretch occupies residues 429 to 434 (IFNKRE). 2 stretches are compositionally biased toward basic and acidic residues: residues 433–474 (RETP…REMS) and 485–498 (RQDR…RPQL). Disordered stretches follow at residues 433–498 (RETP…RPQL) and 512–551 (WAKD…EPRI). A coiled-coil region spans residues 437–477 (EEREERFRRETEENEERRRAEDEQREKERDRRRQREMSKLL). A CCHC-type zinc finger spans residues 501–518 (DQCAYCKEKGHWAKDCPK). Positions 560–630 (VTFLVDTGAQ…CPYPLLGRDL (71 aa)) constitute a Peptidase A2 domain. Catalysis depends on D565, which acts as the Protease; shared with dimeric partner. Positions 740-931 (LDQGILVPCQ…KQVKYLGYLL (192 aa)) constitute a Reverse transcriptase domain. Mg(2+)-binding residues include D808, D882, D883, D1182, E1220, D1241, and D1311. The region spanning 1173-1319 (PDADHTWYTD…ADQAAREAAI (147 aa)) is the RNase H type-1 domain. The HHCC-type zinc-finger motif lies at 1386-1426 (HRLTHLGYQKMKALLDRGESPYYMLNRDKTLQYVADSCTVC). In terms of domain architecture, Integrase catalytic spans 1443 to 1601 (RGHRPGTHWE…TPYEILYGAP (159 aa)). Mg(2+)-binding residues include D1454 and D1513.

Belongs to the retroviral Pol polyprotein family. As to quaternary structure, homohexamer; further associates as homomultimer. The virus core is composed of a lattice formed from hexagonal rings, each containing six capsid monomers. Interacts with mouse UBE2I and mouse PIAS4. In terms of assembly, interacts (via PPXY motif) with host NEDD4. Interacts (via PSAP motif) with host TSG101. Interacts (via LYPX(n)L motif) with host PDCD6IP. The reverse transcriptase is a monomer (Potential). Interacts (via RNase domains) with host release factor ETF1; this interaction is essential for translational readthrough of amber codon between viral gag and pol genes, as well as for viral replication. As to quaternary structure, homodimer. Mg(2+) is required as a cofactor. Ubiquitinated by ITCH. Gag can recruit the ubiquitin ligase Itch in an L domain-independent manner to facilitate virus release via a mechanism that involves Gag ubiquitination. In terms of processing, specific enzymatic cleavages by the viral protease yield mature proteins. The protease is released by autocatalytic cleavage. The polyprotein is cleaved during and after budding, this process is termed maturation. Post-translationally, sumoylated; which is required for virus replication. Phosphorylated on serine residues.

The protein localises to the virion. The protein resides in the host cell membrane. Its subcellular location is the host late endosome membrane. It localises to the host endosome. It is found in the host multivesicular body. The protein localises to the host cytoplasm. The catalysed reaction is DNA(n) + a 2'-deoxyribonucleoside 5'-triphosphate = DNA(n+1) + diphosphate. The enzyme catalyses Endonucleolytic cleavage to 5'-phosphomonoester.. Most efficiently inhibited by Amprenavir, which is able to block Gag-Pol processing in infected cells. In terms of biological role, plays a role in budding and is processed by the viral protease during virion maturation outside the cell. During budding, it recruits, in a PPXY-dependent or independent manner, Nedd4-like ubiquitin ligases that conjugate ubiquitin molecules to Gag-Pol, or to Gag-Pol binding host factors. Interaction with HECT ubiquitin ligases probably links the viral protein to the host ESCRT pathway and facilitates release. Functionally, targets Gag and gag-pol polyproteins to the plasma membrane via a multipartite membrane binding signal, that includes its myristoylated N-terminus. Also mediates nuclear localization of the pre-integration complex. Constituent of the pre-integration complex (PIC) which tethers the latter to mitotic chromosomes. This allows the integration of the viral genome into the host DNA. Its function is as follows. Forms the spherical core of the virion that encapsulates the genomic RNA-nucleocapsid complex. In terms of biological role, involved in the packaging and encapsidation of two copies of the genome. Binds with high affinity to conserved UCUG elements within the packaging signal, located near the 5'-end of the genome. This binding is dependent on genome dimerization. Acts as a nucleic acid chaperone which is involved in rearrangement of nucleic acid secondary structures during gRNA retrotranscription. Functionally, the aspartyl protease mediates proteolytic cleavages of Gag and Gag-Pol polyproteins during or shortly after the release of the virion from the plasma membrane. Cleavages take place as an ordered, step-wise cascade to yield mature proteins. This process is called maturation. Displays maximal activity during the budding process just prior to particle release from the cell (Potential). Cleaves the translation initiation factor eIF4G leading to the inhibition of host cap-dependent translation. RT is a multifunctional enzyme that converts the viral dimeric RNA genome into dsDNA in the cytoplasm, shortly after virus entry into the cell. This enzyme displays a DNA polymerase activity that can copy either DNA or RNA templates, and a ribonuclease H (RNase H) activity that cleaves the RNA strand of RNA-DNA heteroduplexes in a partially processive 3' to 5' endonucleasic mode. Conversion of viral genomic RNA into dsDNA requires many steps. A tRNA binds to the primer-binding site (PBS) situated at the 5' end of the viral RNA. RT uses the 3' end of the tRNA primer to perform a short round of RNA-dependent minus-strand DNA synthesis. The reading proceeds through the U5 region and ends after the repeated (R) region which is present at both ends of viral RNA. The portion of the RNA-DNA heteroduplex is digested by the RNase H, resulting in a ssDNA product attached to the tRNA primer. This ssDNA/tRNA hybridizes with the identical R region situated at the 3' end of viral RNA. This template exchange, known as minus-strand DNA strong stop transfer, can be either intra- or intermolecular. RT uses the 3' end of this newly synthesized short ssDNA to perform the RNA-dependent minus-strand DNA synthesis of the whole template. RNase H digests the RNA template except for a polypurine tract (PPT) situated at the 5' end of the genome. It is not clear if both polymerase and RNase H activities are simultaneous. RNase H probably can proceed both in a polymerase-dependent (RNA cut into small fragments by the same RT performing DNA synthesis) and a polymerase-independent mode (cleavage of remaining RNA fragments by free RTs). Secondly, RT performs DNA-directed plus-strand DNA synthesis using the PPT that has not been removed by RNase H as primers. PPT and tRNA primers are then removed by RNase H. The 3' and 5' ssDNA PBS regions hybridize to form a circular dsDNA intermediate. Strand displacement synthesis by RT to the PBS and PPT ends produces a blunt ended, linear dsDNA copy of the viral genome that includes long terminal repeats (LTRs) at both ends. Its function is as follows. Catalyzes viral DNA integration into the host chromosome, by performing a series of DNA cutting and joining reactions. This enzyme activity takes place after virion entry into a cell and reverse transcription of the RNA genome in dsDNA. The first step in the integration process is 3' processing. This step requires a complex comprising the viral genome, matrix protein and integrase. This complex is called the pre-integration complex (PIC). The integrase protein removes 2 nucleotides from each 3' end of the viral DNA, leaving recessed CA OH's at the 3' ends. In the second step that requires cell division, the PIC enters cell nucleus. In the third step, termed strand transfer, the integrase protein joins the previously processed 3' ends to the 5' ends of strands of target cellular DNA at the site of integration. The last step is viral DNA integration into host chromosome. The protein is Gag-Pol polyprotein (pol) of Mus musculus (Mouse).